A 294-amino-acid polypeptide reads, in one-letter code: Protoheme IX farnesyltransferase (294 aa).

Helical transmembrane passes span 22 to 42 (VTQL…PDLP), 46 to 66 (IVIA…AINC), 89 to 109 (ITVP…MWVL), 116 to 136 (LTMW…TIIL), 143 to 163 (NIVI…AAVA), 170 to 190 (AWIL…ALAL), 211 to 231 (AFTQ…TMLP), 232 to 252 (FAVG…DVIF), and 272 to 292 (FTYS…DHYL).

The protein belongs to the UbiA prenyltransferase family. Protoheme IX farnesyltransferase subfamily.

It is found in the cell inner membrane. The catalysed reaction is heme b + (2E,6E)-farnesyl diphosphate + H2O = Fe(II)-heme o + diphosphate. It participates in porphyrin-containing compound metabolism; heme O biosynthesis; heme O from protoheme: step 1/1. In terms of biological role, converts heme B (protoheme IX) to heme O by substitution of the vinyl group on carbon 2 of heme B porphyrin ring with a hydroxyethyl farnesyl side group. The polypeptide is Protoheme IX farnesyltransferase (Herminiimonas arsenicoxydans).